Here is a 299-residue protein sequence, read N- to C-terminus: Ribosomal RNA small subunit methyltransferase H (299 aa).

Residues 24–26, D43, F68, D90, and Q97 each bind S-adenosyl-L-methionine; that span reads GGH.

This sequence belongs to the methyltransferase superfamily. RsmH family.

The protein resides in the cytoplasm. The enzyme catalyses cytidine(1402) in 16S rRNA + S-adenosyl-L-methionine = N(4)-methylcytidine(1402) in 16S rRNA + S-adenosyl-L-homocysteine + H(+). Specifically methylates the N4 position of cytidine in position 1402 (C1402) of 16S rRNA. The protein is Ribosomal RNA small subunit methyltransferase H of Francisella tularensis subsp. tularensis (strain WY96-3418).